The primary structure comprises 189 residues: Probable nicotinate-nucleotide adenylyltransferase (189 aa).

It belongs to the NadD family.

The catalysed reaction is nicotinate beta-D-ribonucleotide + ATP + H(+) = deamido-NAD(+) + diphosphate. The protein operates within cofactor biosynthesis; NAD(+) biosynthesis; deamido-NAD(+) from nicotinate D-ribonucleotide: step 1/1. In terms of biological role, catalyzes the reversible adenylation of nicotinate mononucleotide (NaMN) to nicotinic acid adenine dinucleotide (NaAD). This Bacillus cereus (strain B4264) protein is Probable nicotinate-nucleotide adenylyltransferase.